The primary structure comprises 540 residues: Chaperonin GroEL 1 (540 aa).

ATP contacts are provided by residues 29-32 (TLGP), 86-90 (DGTTT), G413, 478-480 (NAA), and D494.

This sequence belongs to the chaperonin (HSP60) family. As to quaternary structure, forms a cylinder of 14 subunits composed of two heptameric rings stacked back-to-back. Interacts with the co-chaperonin GroES.

The protein localises to the cytoplasm. It carries out the reaction ATP + H2O + a folded polypeptide = ADP + phosphate + an unfolded polypeptide.. Together with its co-chaperonin GroES, plays an essential role in assisting protein folding. The GroEL-GroES system forms a nano-cage that allows encapsulation of the non-native substrate proteins and provides a physical environment optimized to promote and accelerate protein folding. The sequence is that of Chaperonin GroEL 1 from Mycobacterium sp. (strain JLS).